The following is a 77-amino-acid chain: MNRTSESVEPQQNEKTAVHWSREWVPVVVDTYSNEDDEDNEEGDESRPQRTFLVKRWVQDNVQVEKKGDEETAAADN.

The span at 1–15 (MNRTSESVEPQQNEK) shows a compositional bias: polar residues. Disordered stretches follow at residues 1–20 (MNRT…AVHW) and 31–52 (TYSN…QRTF). The span at 33 to 44 (SNEDDEDNEEGD) shows a compositional bias: acidic residues.

This is an uncharacterized protein from Schizosaccharomyces pombe (strain 972 / ATCC 24843) (Fission yeast).